Reading from the N-terminus, the 406-residue chain is 5-methylthioadenosine/S-adenosylhomocysteine deaminase (406 aa).

Residues His-55 and His-57 each contribute to the Zn(2+) site. Positions 84, 136, 148, and 173 each coordinate substrate. His-200 contributes to the Zn(2+) binding site. Substrate-binding residues include Glu-203 and Asp-279. A Zn(2+)-binding site is contributed by Asp-279.

This sequence belongs to the metallo-dependent hydrolases superfamily. MTA/SAH deaminase family. Requires Zn(2+) as cofactor.

It catalyses the reaction S-adenosyl-L-homocysteine + H2O + H(+) = S-inosyl-L-homocysteine + NH4(+). The enzyme catalyses S-methyl-5'-thioadenosine + H2O + H(+) = S-methyl-5'-thioinosine + NH4(+). Its function is as follows. Catalyzes the deamination of 5-methylthioadenosine and S-adenosyl-L-homocysteine into 5-methylthioinosine and S-inosyl-L-homocysteine, respectively. Is also able to deaminate adenosine. Adenosine-5-monophosphate (AMP) and S-adenosyl-L-methionine (SAM) are not enzyme substrates. The sequence is that of 5-methylthioadenosine/S-adenosylhomocysteine deaminase (mtaD) from Thermotoga maritima (strain ATCC 43589 / DSM 3109 / JCM 10099 / NBRC 100826 / MSB8).